The chain runs to 373 residues: ATP synthase gamma chain 1, chloroplastic (373 aa).

Residues 1 to 50 (MACSNLTTMWVSSKPSLSADSSSLSFRSVLKCPTNTSSPPSRASSVSPLQ) constitute a chloroplast transit peptide. Residue cysteine 139 is part of the active site. Residues cysteine 249 and cysteine 255 are joined by a disulfide bond. Serine 347 bears the Phosphoserine mark.

The protein belongs to the ATPase gamma chain family. In terms of assembly, F-type ATPases have 2 components, CF(1) - the catalytic core - and CF(0) - the membrane proton channel. CF(1) has five subunits: alpha(3), beta(3), gamma(1), delta(1), epsilon(1). CF(0) has four main subunits: a, b, b' and c. Interacts with PAB.

The protein localises to the plastid. Its subcellular location is the chloroplast thylakoid membrane. Produces ATP from ADP in the presence of a proton gradient across the membrane. The gamma chain is believed to be important in regulating ATPase activity and the flow of protons through the CF(0) complex. This is ATP synthase gamma chain 1, chloroplastic (ATPC1) from Arabidopsis thaliana (Mouse-ear cress).